We begin with the raw amino-acid sequence, 203 residues long: Synaptosomal-associated protein 25-B (203 aa).

Over residues 1–11 (MADEADMRNEL) the composition is skewed to basic and acidic residues. The interval 1 to 25 (MADEADMRNELTDMQARADQLGDES) is disordered. 2 t-SNARE coiled-coil homology domains span residues 19 to 81 (DQLG…LTDL) and 137 to 199 (DARE…ATKM).

This sequence belongs to the SNAP-25 family.

Its subcellular location is the synapse. It is found in the synaptosome. The protein resides in the cell membrane. Functionally, may play an important role in the synaptic function of specific neuronal systems. Associates with proteins involved in vesicle docking and membrane fusion. In Carassius auratus (Goldfish), this protein is Synaptosomal-associated protein 25-B (snap25b).